The sequence spans 115 residues: Large ribosomal subunit protein P2 (115 aa).

Met-1 is modified (N-acetylmethionine). Residues Ser-17 and Ser-19 each carry the phosphoserine modification. At Lys-21 the chain carries N6-acetyllysine; alternate. An N6-succinyllysine; alternate modification is found at Lys-21. A compositionally biased stretch (low complexity) spans 76 to 90 (APGSAAPAAGSAPAA). The segment at 76–115 (APGSAAPAAGSAPAAAEERKEEKKEESEESDDDMGFGLFD) is disordered. A phosphoserine mark is found at Ser-79 and Ser-86. Basic and acidic residues predominate over residues 91–101 (AEERKEEKKEE). Phosphoserine is present on residues Ser-102 and Ser-105.

The protein belongs to the eukaryotic ribosomal protein P1/P2 family. Heterodimer with RPLP1 at the lateral ribosomal stalk of the large ribosomal subunit.

Plays an important role in the elongation step of protein synthesis. This chain is Large ribosomal subunit protein P2 (RPLP2), found in Equus caballus (Horse).